Here is a 62-residue protein sequence, read N- to C-terminus: Defensin BmKDfsin6 (62 aa).

Residues 1 to 24 (MKVIAILFLLAFVLCTMEITMVEA) form the signal peptide. Intrachain disulfides connect C28/C49, C35/C57, and C39/C59.

It belongs to the invertebrate defensin family. Type 2 subfamily. In terms of tissue distribution, highly expressed in non-venom gland (hemolymph) and moderately expressed in venom gland.

It is found in the secreted. Its function is as follows. Antibacterial peptide active against Gram-positive bacteria, but not on Gram-negative bacteria. Also has weak blocking activity on Kv1.1/KCNA1, Kv1.2/KCNA2, Kv1.3/KCNA3, KCa3.1/KCNN4/IK, KCa2.3/KCNN3/SK3 and Kv11.1/KCNH2/ERG1 channels (tested at 1 uM). It inhibits potassium channel current by interacting with the pore region. This Olivierus martensii (Manchurian scorpion) protein is Defensin BmKDfsin6.